The primary structure comprises 310 residues: MPEKLQVAIVGSGNISTDLLYKLQRSEYLEPRWMIGIDPESEGLARARKLGLETSHEGVDWLLAQDDKPDLVFEATSAYVHRAAAPRYEEAGIRAIDLTPAAVGPAVIPPANLREHLDAPNVNMITCGGQATIPIVYAVTRAVTEQGGTVPYAEIVASVSSSSAGPGTRANIDEFTKTTSKGVQTIGGAARGKAIIILNPADPPMIMRDTIFCAIPEDVDRDAIAQSIRDVVAEVQTYVPGYRLLNDPQFDDPSINSGGQAVVTTFVEVEGAGDYLPPYAGNLDIMTAAAAKVGEEIAKESLSLAGGAQA.

An NAD(+)-binding site is contributed by 12-15; it reads SGNI. Cys-127 functions as the Acyl-thioester intermediate in the catalytic mechanism. NAD(+) is bound by residues 163-171 and Asn-282; that span reads SAGPGTRAN.

Belongs to the acetaldehyde dehydrogenase family.

It carries out the reaction acetaldehyde + NAD(+) + CoA = acetyl-CoA + NADH + H(+). The sequence is that of Acetaldehyde dehydrogenase 1 from Mycobacterium sp. (strain KMS).